The following is a 573-amino-acid chain: DEAD-box ATP-dependent RNA helicase 47A (573 aa).

A Q motif motif is present at residues Lys-131–Ser-159. One can recognise a Helicase ATP-binding domain in the interval Ile-162–Val-362. Ser-175–Thr-182 contributes to the ATP binding site. Positions Asp-293–Asp-296 match the DEAD box motif. The region spanning Thr-421–Leu-565 is the Helicase C-terminal domain.

This sequence belongs to the DEAD box helicase family.

The enzyme catalyses ATP + H2O = ADP + phosphate + H(+). The polypeptide is DEAD-box ATP-dependent RNA helicase 47A (Oryza sativa subsp. japonica (Rice)).